A 278-amino-acid polypeptide reads, in one-letter code: Large ribosomal subunit protein uL2 (278 aa).

Disordered stretches follow at residues 28-56 (KPVK…GIAG) and 221-278 (RGVA…KKKR). Over residues 269 to 278 (IRSRHAKKKR) the composition is skewed to basic residues.

This sequence belongs to the universal ribosomal protein uL2 family. Part of the 50S ribosomal subunit. Forms a bridge to the 30S subunit in the 70S ribosome.

One of the primary rRNA binding proteins. Required for association of the 30S and 50S subunits to form the 70S ribosome, for tRNA binding and peptide bond formation. It has been suggested to have peptidyltransferase activity; this is somewhat controversial. Makes several contacts with the 16S rRNA in the 70S ribosome. This chain is Large ribosomal subunit protein uL2, found in Rhizorhabdus wittichii (strain DSM 6014 / CCUG 31198 / JCM 15750 / NBRC 105917 / EY 4224 / RW1) (Sphingomonas wittichii).